The primary structure comprises 247 residues: Small ribosomal subunit protein uS2 (247 aa).

It belongs to the universal ribosomal protein uS2 family.

The polypeptide is Small ribosomal subunit protein uS2 (Cupriavidus taiwanensis (strain DSM 17343 / BCRC 17206 / CCUG 44338 / CIP 107171 / LMG 19424 / R1) (Ralstonia taiwanensis (strain LMG 19424))).